The following is a 373-amino-acid chain: Transaldolase (373 aa).

The active-site Schiff-base intermediate with substrate is the Lys-143.

Belongs to the transaldolase family. Type 2 subfamily.

The protein resides in the cytoplasm. It catalyses the reaction D-sedoheptulose 7-phosphate + D-glyceraldehyde 3-phosphate = D-erythrose 4-phosphate + beta-D-fructose 6-phosphate. It participates in carbohydrate degradation; pentose phosphate pathway; D-glyceraldehyde 3-phosphate and beta-D-fructose 6-phosphate from D-ribose 5-phosphate and D-xylulose 5-phosphate (non-oxidative stage): step 2/3. Functionally, transaldolase is important for the balance of metabolites in the pentose-phosphate pathway. This Mycobacterium tuberculosis (strain ATCC 25618 / H37Rv) protein is Transaldolase (tal).